The following is a 665-amino-acid chain: Prelamin-A/C (665 aa).

An N-acetylmethionine modification is found at methionine 1. The segment at 1-25 is disordered; that stretch reads METPSQRRATRSGAQASSTPLSPTR. Residues 1 to 33 are head; that stretch reads METPSQRRATRSGAQASSTPLSPTRITRLQEKE. The interval 1-130 is interaction with MLIP; it reads METPSQRRAT…TKKEGDLLAA (130 aa). Threonine 3 carries the phosphothreonine modification. A Phosphoserine modification is found at serine 5. Phosphothreonine is present on threonine 10. Residues serine 12 and serine 18 each carry the phosphoserine modification. Residue threonine 19 is modified to Phosphothreonine. Serine 22 carries the post-translational modification Phosphoserine. The IF rod domain maps to 31-387; the sequence is EKEDLQELND…KLLEGEEERL (357 aa). At lysine 32 the chain carries N6-acetyllysine; alternate. Lysine 32 bears the N6-succinyllysine; alternate mark. Lysine 32 participates in a covalent cross-link: Glycyl lysine isopeptide (Lys-Gly) (interchain with G-Cter in SUMO2); alternate. Residues 34-70 form a coil 1A region; it reads DLQELNDRLAVYIDRVRSLETENAGLRLRITESEEVV. Phosphoserine is present on residues serine 51, serine 66, and serine 71. A linker 1 region spans residues 71–80; sequence SREVSGIKAA. Residues lysine 78 and lysine 97 each carry the N6-acetyllysine modification. A coil 1B region spans residues 81 to 218; sequence YEAELGDARK…NIYSEELRET (138 aa). Lysine 97 is covalently cross-linked (Glycyl lysine isopeptide (Lys-Gly) (interchain with G-Cter in SUMO2)). Serine 107 carries the phosphoserine modification. N6-acetyllysine is present on residues lysine 108, lysine 114, lysine 123, lysine 135, lysine 144, and lysine 155. At lysine 171 the chain carries N6-acetyllysine; alternate. Lysine 171 is modified (N6-succinyllysine; alternate). Residue lysine 171 forms a Glycyl lysine isopeptide (Lys-Gly) (interchain with G-Cter in SUMO2); alternate linkage. Lysine 180, lysine 201, and lysine 208 each carry N6-acetyllysine. A Glycyl lysine isopeptide (Lys-Gly) (interchain with G-Cter in SUMO2); alternate cross-link involves residue lysine 201. Residue lysine 201 forms a Glycyl lysine isopeptide (Lys-Gly) (interchain with G-Cter in SUMO); alternate linkage. Residue lysine 208 forms a Glycyl lysine isopeptide (Lys-Gly) (interchain with G-Cter in SUMO2) linkage. Serine 212 carries the phosphoserine modification. Residues lysine 219 and lysine 233 each participate in a glycyl lysine isopeptide (Lys-Gly) (interchain with G-Cter in SUMO2) cross-link. Residues 219–242 form a linker 2 region; sequence KRRHETRLVEIDNGKQREFESRLA. Lysine 233, lysine 260, lysine 265, and lysine 270 each carry N6-acetyllysine. The segment at 243 to 383 is coil 2; that stretch reads DALQELRAQH…HAYRKLLEGE (141 aa). Lysine 260 is covalently cross-linked (Glycyl lysine isopeptide (Lys-Gly) (interchain with G-Cter in SUMO2); alternate). A Glycyl lysine isopeptide (Lys-Gly) (interchain with G-Cter in SUMO2); alternate cross-link involves residue lysine 270. Serine 277, serine 282, serine 301, and serine 307 each carry phosphoserine. A Glycyl lysine isopeptide (Lys-Gly) (interchain with G-Cter in SUMO2); alternate cross-link involves residue lysine 311. N6-acetyllysine occurs at positions 311, 316, and 341. Glycyl lysine isopeptide (Lys-Gly) (interchain with G-Cter in SUMO2) cross-links involve residues lysine 366 and lysine 378. The disordered stretch occupies residues 384 to 442; sequence EERLRLSPSPTSQRSRGRASSHSSQSQGGGSVTKKRKLESSESRSSFSQHARTSGRVAV. The segment at 384-665 is tail; the sequence is EERLRLSPSP…SQSSQNCSIM (282 aa). Serine 390, serine 392, serine 395, serine 398, serine 403, serine 404, serine 406, serine 407, serine 409, and serine 414 each carry phosphoserine. Serine 392 carries the phosphoserine; by CDK1 modification. Residues 395-409 are compositionally biased toward low complexity; sequence SQRSRGRASSHSSQS. Phosphothreonine is present on threonine 416. Residues lysine 417 and lysine 420 each carry the N6-acetyllysine modification. Residues lysine 417 and lysine 420 each participate in a glycyl lysine isopeptide (Lys-Gly) (interchain with G-Cter in SUMO2) cross-link. Residues 417–422 carry the Nuclear localization signal motif; the sequence is KKRKLE. A phosphoserine mark is found at serine 423, serine 426, serine 429, and serine 431. Residues 428-545 enclose the LTD domain; the sequence is SSFSQHARTS…EEVAMRKLVR (118 aa). Residue lysine 450 forms a Glycyl lysine isopeptide (Lys-Gly) (interchain with G-Cter in SUMO2); alternate linkage. Lysine 450 and lysine 457 each carry N6-acetyllysine. A phosphoserine mark is found at serine 458, glutamate 460, and serine 463. Lysine 486 is modified (N6-acetyllysine). Lysine 486 participates in a covalent cross-link: Glycyl lysine isopeptide (Lys-Gly) (interchain with G-Cter in SUMO2). Threonine 496 carries the phosphothreonine modification. Serine 500 carries the phosphoserine modification. Phosphothreonine is present on residues threonine 505 and threonine 510. Phosphoserine is present on residues serine 533 and serine 546. The residue at position 548 (threonine 548) is a Phosphothreonine. A disordered region spans residues 553–577; it reads NEDDDEDGEELLHHHRGSHCSGSGD. Residues serine 570, cysteine 572, and serine 573 each carry the phosphoserine modification. Lysine 599 participates in a covalent cross-link: Glycyl lysine isopeptide (Lys-Gly) (interchain with G-Cter in SUMO2); alternate. A Glycyl lysine isopeptide (Lys-Gly) (interchain with G-Cter in SUMO1); alternate cross-link involves residue lysine 599. A phosphoserine mark is found at serine 613, serine 614, serine 617, and serine 620. Serine 626 and serine 629 each carry an O-linked (GlcNAc) serine glycan. Residues serine 629, serine 633, serine 637, and serine 653 each carry the phosphoserine modification. The propeptide at 648 to 662 is removed in Lamin-A/C form; that stretch reads LLGNSSPRSQSSQNC. Position 662 is a cysteine methyl ester (cysteine 662). Cysteine 662 carries the S-farnesyl cysteine lipid modification. The propeptide at 663–665 is removed in Prelamin-A/C form and in Lamin-A/C form; it reads SIM.

It belongs to the intermediate filament family. As to quaternary structure, homodimer of lamin A and lamin C. Lamin dimers then assemble into dimeric head-to-tail polymers. Ultimately, two head-to-tail polymers assemble laterally into a protofilament with a uniformly shaped rod of 3.5 nm in diameter. Interacts with lamin-associated polypeptides IA, IB and TMPO-alpha, RB1 and with emerin. Proteolytically processed isoform A interacts with NARF. Interacts with SREBF1, SREBF2, SUN1, SUN2 and TMEM43. Interacts with TMEM201. Prelamin-A/C interacts with EMD. Interacts with DMPK; may regulate nuclear envelope stability. Interacts with MLIP. Interacts with SUV39H1; the interaction increases stability of SUV39H1. Interacts with ITSN1 isoform 2. Interacts with IFFO1; the interaction forms an interior nucleoskeleton and the recruitment to DNA double-strand breaks. In terms of assembly, interacts with EMD. Interacts (via C-terminus) with LEMD2 (via N-terminus) (in vitro). Proteolytic cleavage of the C-terminal of 18 residues of prelamin-A/C results in the production of lamin-A/C. The prelamin-A/C maturation pathway includes farnesylation of CAAX motif by protein farnesyltransferase (FNTA and FNTB), removal of the last three amino acids (-AAX) by RCE1/FACE2 and/or ZMPSTE24, methylation of the C-terminal cysteine by ICMT and endoproteolytic removal of the last 15 C-terminal amino acids by ZMPSTE24. Proteolytic cleavage requires prior farnesylation and methylation, and absence of these blocks cleavage. Post-translationally, farnesylation of prelamin-A/C facilitates nuclear envelope targeting. In terms of processing, phosphorylation plays a key role in lamin organization, subcellular localization and nuclear envelope disintegration. Phosphorylation by CDK1 at Ser-22 and Ser-392 at the onset of mitosis drives lamin disassembly and nuclear envelope breakdown. Phosphorylation at Ser-22 and Ser-392 during interphase promotes localization to the nucleoplasm and regulates lamina assembly. Phosphorylation at Ser-22, Ser-392 and Ser-629 during interphase causes redistribution between the nucleus and the cytoplasm. Phosphorylation at Ser-22 by CDK1 regulates matrix stiffness. Phosphorylation status of Ser-22 determines its localization between double-strand break (DSB) sites and the nuclear matrix. Phosphorylated by ATR at Ser-282 in response to DNA damage, leading to lamin disassembly and nuclear envelope rupture. Phosphorylation also regulates stability in micronuclei arising from genome instability: phosphorylation at Ser-395 by ATR in response to genome instability and double-stranded DNA breaks primes LMNA for subsequent phosphorylation at Ser-392 by CDK1 and micronuclei envelope rupture. The rupture of micronuclear envelope triggers the cGAS-STING pathway thereby activating the type I interferon response and innate immunity. Isoform C is phosphorylated on Ser-392, Ser-407 and Ser-409 at interphase. Post-translationally, acetylation by KAT8 is required for nuclear architecture. In terms of processing, sumoylation is necessary for the localization to the nuclear envelope. The N-terminus is blocked. Expressed in liver and in bone marrow (at protein level). Expressed in cardiomyocytes. As to expression, specifically expressed in germ cells.

It localises to the nucleus lamina. Its subcellular location is the nucleus envelope. The protein localises to the nucleus. The protein resides in the nucleoplasm. It is found in the nucleus matrix. Its function is as follows. Lamins are intermediate filament proteins that assemble into a filamentous meshwork, and which constitute the major components of the nuclear lamina, a fibrous layer on the nucleoplasmic side of the inner nuclear membrane. Lamins provide a framework for the nuclear envelope, bridging the nuclear envelope and chromatin, thereby playing an important role in nuclear assembly, chromatin organization, nuclear membrane and telomere dynamics. Lamin A and C also regulate matrix stiffness by conferring nuclear mechanical properties. The structural integrity of the lamina is strictly controlled by the cell cycle, as seen by the disintegration and formation of the nuclear envelope in prophase and telophase, respectively. Lamin A and C are present in equal amounts in the lamina of mammals. Also invoved in DNA repair: recruited by DNA repair proteins XRCC4 and IFFO1 to the DNA double-strand breaks (DSBs) to prevent chromosome translocation by immobilizing broken DNA ends. Required for normal development of peripheral nervous system and skeletal muscle and for muscle satellite cell proliferation. Required for osteoblastogenesis and bone formation. Also prevents fat infiltration of muscle and bone marrow, helping to maintain the volume and strength of skeletal muscle and bone. Required for cardiac homeostasis. Prelamin-A/C can accelerate smooth muscle cell senescence. It acts to disrupt mitosis and induce DNA damage in vascular smooth muscle cells (VSMCs), leading to mitotic failure, genomic instability, and premature senescence. Functionally, isoform C2 may have a role in determining the organization of nuclear and chromosomal structures during spermatogenesis. The sequence is that of Prelamin-A/C (Lmna) from Mus musculus (Mouse).